A 56-amino-acid polypeptide reads, in one-letter code: MDRRLLEILACPICKGKLVYSQDEQELICRFDKLAYPIHDGIPVMLPDSTRPLIER.

The protein belongs to the UPF0434 family.

This Coxiella burnetii (strain CbuK_Q154) (Coxiella burnetii (strain Q154)) protein is UPF0434 protein CbuK_1382.